Consider the following 357-residue polypeptide: Zinc finger protein 830 (357 aa).

A C2H2-type zinc finger spans residues 47 to 69 (CVVCNIQIKSELLWPAHILGKQH). 3 disordered regions span residues 98–126 (RKGSEPENQESKRIKGTEDQPTALKTKLP), 157–194 (DDDEVEGEEYENVNEASTSLQKPAEIPLPPPTSSADRL), and 231–255 (ALPEGFFDDPEADAKVRKVDAPKDQ). Positions 99–115 (KGSEPENQESKRIKGTE) are enriched in basic and acidic residues. Residues 157–168 (DDDEVEGEEYEN) show a composition bias toward acidic residues. A compositionally biased stretch (basic and acidic residues) spans 242–255 (ADAKVRKVDAPKDQ). Residues 279–325 (AEEDEEGRLDRQIDEIDEQIECYRRVEHLRDLKDTLQDAKMEVLKSK) are a coiled coil.

The protein resides in the nucleus. It is found in the chromosome. It localises to the nucleus speckle. May act as an important regulator of the cell cycle that participates in the maintenance of genome integrity. This Xenopus tropicalis (Western clawed frog) protein is Zinc finger protein 830.